A 268-amino-acid polypeptide reads, in one-letter code: DNA repair protein RecO (268 aa).

It belongs to the RecO family.

In terms of biological role, involved in DNA repair and RecF pathway recombination. The polypeptide is DNA repair protein RecO (Parasynechococcus marenigrum (strain WH8102)).